The chain runs to 318 residues: Aspartate carbamoyltransferase catalytic subunit (318 aa).

2 residues coordinate carbamoyl phosphate: Arg-54 and Thr-55. Residue Lys-82 participates in L-aspartate binding. Positions 104, 134, and 137 each coordinate carbamoyl phosphate. L-aspartate is bound by residues Arg-174 and Arg-230. Residues Gly-271 and Pro-272 each contribute to the carbamoyl phosphate site.

This sequence belongs to the aspartate/ornithine carbamoyltransferase superfamily. ATCase family. Heterododecamer (2C3:3R2) of six catalytic PyrB chains organized as two trimers (C3), and six regulatory PyrI chains organized as three dimers (R2).

It carries out the reaction carbamoyl phosphate + L-aspartate = N-carbamoyl-L-aspartate + phosphate + H(+). It functions in the pathway pyrimidine metabolism; UMP biosynthesis via de novo pathway; (S)-dihydroorotate from bicarbonate: step 2/3. Its function is as follows. Catalyzes the condensation of carbamoyl phosphate and aspartate to form carbamoyl aspartate and inorganic phosphate, the committed step in the de novo pyrimidine nucleotide biosynthesis pathway. In Clavibacter michiganensis subsp. michiganensis (strain NCPPB 382), this protein is Aspartate carbamoyltransferase catalytic subunit.